The chain runs to 278 residues: Extracellular metalloprotease MCYG_03238 (278 aa).

An N-terminal signal peptide occupies residues 1-19 (MRFSIVLSSIAALSSVAAA). N-linked (GlcNAc...) asparagine glycosylation is present at asparagine 52. Residue histidine 170 participates in Zn(2+) binding. Glutamate 171 is an active-site residue. Residue histidine 174 participates in Zn(2+) binding. Cysteines 209 and 255 form a disulfide.

The protein belongs to the peptidase M43B family.

It is found in the secreted. Secreted metalloproteinase that allows assimilation of proteinaceous substrates. Plays a pivotal role as a pathogenicity determinant during infections and contributes to the ability of the pathogen to persist within the mammalian host. The sequence is that of Extracellular metalloprotease MCYG_03238 from Arthroderma otae (strain ATCC MYA-4605 / CBS 113480) (Microsporum canis).